Here is a 262-residue protein sequence, read N- to C-terminus: ATP synthase subunit a (262 aa).

Transmembrane regions (helical) follow at residues 50–70 (TMIMTWITMALVLLFAWACTK), 107–127 (MMPIIVTFFIYIVFANLLGLI), 141–161 (FGLALIVVLLIHYHGLKANGV), 194–214 (LYGNIFAGEVLIAVLLGLINI), 218–238 (VFGGFIPSVIWLAFSVFVGFV), and 239–259 (QAFVFSMLTIAYVSQFAAHEA).

Belongs to the ATPase A chain family. As to quaternary structure, F-type ATPases have 2 components, CF(1) - the catalytic core - and CF(0) - the membrane proton channel. CF(1) has five subunits: alpha(3), beta(3), gamma(1), delta(1), epsilon(1). CF(0) has three main subunits: a(1), b(2) and c(9-12). The alpha and beta chains form an alternating ring which encloses part of the gamma chain. CF(1) is attached to CF(0) by a central stalk formed by the gamma and epsilon chains, while a peripheral stalk is formed by the delta and b chains.

It localises to the cell membrane. Functionally, key component of the proton channel; it plays a direct role in the translocation of protons across the membrane. The polypeptide is ATP synthase subunit a (Desulforamulus reducens (strain ATCC BAA-1160 / DSM 100696 / MI-1) (Desulfotomaculum reducens)).